Consider the following 410-residue polypeptide: E3 ubiquitin-protein ligase PRT1 (410 aa).

2 RING-type zinc fingers span residues 26–66 and 192–232; these read CCVC…PICR and CSAC…QECN. The segment at 306-370 adopts a ZZ-type zinc-finger fold; it reads HFGAGCDSCG…RLELARSPQV (65 aa). Residues cysteine 311, cysteine 314, cysteine 326, cysteine 329, cysteine 338, cysteine 341, histidine 356, and histidine 360 each coordinate Zn(2+). The segment at 385–410 is disordered; it reads ISNEGMDTDEGEEGPPGSSNESSSTE. A compositionally biased stretch (low complexity) spans 399–410; that stretch reads PPGSSNESSSTE.

The protein resides in the cytoplasm. It catalyses the reaction S-ubiquitinyl-[E2 ubiquitin-conjugating enzyme]-L-cysteine + [acceptor protein]-L-lysine = [E2 ubiquitin-conjugating enzyme]-L-cysteine + N(6)-ubiquitinyl-[acceptor protein]-L-lysine.. Its pathway is protein modification; protein ubiquitination. E3 ubiquitin-protein ligase that mediates ubiquitination and subsequent proteasomal degradation of target proteins. Functions in the N-end rule pathway of protein degradation, where it specifically recognizes and ubiquitinates proteins with a N-terminal bulky aromatic amino acid (Phe). Does not act on aliphatic hydrophobic and basic N-terminal residues (Arg or Leu) containing proteins. This chain is E3 ubiquitin-protein ligase PRT1 (PRT1), found in Arabidopsis thaliana (Mouse-ear cress).